A 217-amino-acid chain; its full sequence is Large ribosomal subunit protein uL1 (217 aa).

The protein belongs to the universal ribosomal protein uL1 family.

This is Large ribosomal subunit protein uL1 (RPL10A) from Candida glabrata (strain ATCC 2001 / BCRC 20586 / JCM 3761 / NBRC 0622 / NRRL Y-65 / CBS 138) (Yeast).